Here is a 1438-residue protein sequence, read N- to C-terminus: DNA polymerase III PolC-type (1438 aa).

Positions 422–578 (YVVFDVETTG…YDTEATAYIF (157 aa)) constitute an Exonuclease domain.

This sequence belongs to the DNA polymerase type-C family. PolC subfamily.

The protein resides in the cytoplasm. It carries out the reaction DNA(n) + a 2'-deoxyribonucleoside 5'-triphosphate = DNA(n+1) + diphosphate. Required for replicative DNA synthesis. This DNA polymerase also exhibits 3' to 5' exonuclease activity. The sequence is that of DNA polymerase III PolC-type from Staphylococcus aureus (strain Mu3 / ATCC 700698).